The chain runs to 388 residues: F-box/LRR-repeat protein At3g59190 (388 aa).

Positions K11–P64 constitute an F-box domain. LRR repeat units follow at residues K151–A177, F180–K205, C228–D252, T313–T345, and D346–V371.

In Arabidopsis thaliana (Mouse-ear cress), this protein is F-box/LRR-repeat protein At3g59190.